The following is a 434-amino-acid chain: Transcriptional enhancer factor TEF-3 (434 aa).

Positions methionine 1–serine 28 are enriched in polar residues. Disordered stretches follow at residues methionine 1–valine 42 and glutamine 188–glutamine 215. A DNA-binding region (TEA) is located at residues aspartate 36–glutamate 112. Pro residues predominate over residues glycine 201 to proline 213.

As to quaternary structure, interacts with YAP1 and WWTR1/TAZ. As to expression, preferentially expressed in skeletal muscle. Lower levels in pancreas, placenta, and heart.

It localises to the nucleus. Functionally, transcription factor which plays a key role in the Hippo signaling pathway, a pathway involved in organ size control and tumor suppression by restricting proliferation and promoting apoptosis. The core of this pathway is composed of a kinase cascade wherein MST1/MST2, in complex with its regulatory protein SAV1, phosphorylates and activates LATS1/2 in complex with its regulatory protein MOB1, which in turn phosphorylates and inactivates YAP1 oncoprotein and WWTR1/TAZ. Acts by mediating gene expression of YAP1 and WWTR1/TAZ, thereby regulating cell proliferation, migration and epithelial mesenchymal transition (EMT) induction. Binds specifically and non-cooperatively to the Sph and GT-IIC 'enhansons' (5'-GTGGAATGT-3') and activates transcription. Binds to the M-CAT motif. This Homo sapiens (Human) protein is Transcriptional enhancer factor TEF-3 (TEAD4).